Here is a 460-residue protein sequence, read N- to C-terminus: Keratin, type I cytoskeletal 27 (460 aa).

Residues 1-83 (MSVRFSSASR…GNEHGLLSGN (83 aa)) form a head region. Positions 84–119 (EKVTMQNLNDRLASYLDNVRALEEANADLEQKIKGW) are coil 1A. The IF rod domain maps to 84 to 399 (EKVTMQNLND…RLIDGEDGSC (316 aa)). The linker 1 stretch occupies residues 120–141 (YEKFGPGSCRGLDHDYSRYFTV). The tract at residues 142–233 (IDDLRNQIIS…KNHEEEMKAL (92 aa)) is coil 1B. The segment at 234-256 (QCAAGGNVNVEMNAAPGVDLTVL) is linker 12. A coil 2 region spans residues 257 to 395 (LNNMRAEYEA…ETYCRLIDGE (139 aa)). The interval 396-460 (DGSCAKSKGY…NVKSEQRVPS (65 aa)) is tail. The tract at residues 435–460 (LSSRVHSVEEKSTKVNNVKSEQRVPS) is disordered. The segment covering 448-460 (KVNNVKSEQRVPS) has biased composition (polar residues).

The protein belongs to the intermediate filament family. In terms of assembly, heterotetramer of two type I and two type II keratins. Interacts with KRT6A to form filaments.

The protein resides in the cytoplasm. Its function is as follows. Essential for the proper assembly of type I and type II keratin protein complexes and formation of keratin intermediate filaments in the inner root sheath (irs). This Bos taurus (Bovine) protein is Keratin, type I cytoskeletal 27.